Consider the following 404-residue polypeptide: Multidrug resistance protein MdtG (404 aa).

A run of 11 helical transmembrane segments spans residues 19–39, 56–76, 90–110, 113–133, 144–164, 171–191, 222–242, 254–274, 288–308, 317–337, and 376–396; these read LGCF…PLYV, LVFS…GGLA, LGMA…QFLI, ALLG…ATQV, TLST…GLLA, PVFF…FFFI, LFVT…ILTL, IAFI…LSAP, ILIV…FVQT, FLLG…LVYN, and AVFC…WNSL.

Belongs to the major facilitator superfamily. DHA1 family. MdtG (TC 2.A.1.2.20) subfamily.

The protein localises to the cell inner membrane. The sequence is that of Multidrug resistance protein MdtG from Salmonella typhi.